A 465-amino-acid polypeptide reads, in one-letter code: Gamma-aminobutyric acid receptor subunit rho-2 (465 aa).

Residues 1-20 (MPYFTRLILFLFCLMVLVES) form the signal peptide. Over 21–260 (RKPKRKRWTG…LYINFTLRRH (240 aa)) the chain is Extracellular. Arg-105 is a 4-aminobutanoate binding site. A glycan (N-linked (GlcNAc...) asparagine) is linked at Asn-120. Ser-169 contacts 4-aminobutanoate. Cys-178 and Cys-192 are disulfide-bonded. Glu-197 is a binding site for 4-aminobutanoate. N-linked (GlcNAc...) asparagine glycosylation occurs at Asn-254. A helical membrane pass occupies residues 261-281 (IFFFLLQTYFPATLMVMLSWV). Over 282–293 (SFWIDRRAVPAR) the chain is Cytoplasmic. Residues 294-314 (VSLGITTVLTMTTIITGVNAS) traverse the membrane as a helical segment. Residues 315–325 (MPRVSYVKAVD) are Extracellular-facing. The chain crosses the membrane as a helical span at residues 326-346 (IYLWVSFVFVFLSVLEYAAVN). The Cytoplasmic portion of the chain corresponds to 347–443 (YLTTVQERKE…IFQNTHAIDK (97 aa)). A helical transmembrane segment spans residues 444–464 (YSRLIFPASYIFFNLIYWSVF). Ser-465 is a topological domain (extracellular).

The protein belongs to the ligand-gated ion channel (TC 1.A.9) family. Gamma-aminobutyric acid receptor (TC 1.A.9.5) subfamily. GABRR2 sub-subfamily. As to quaternary structure, three rho subunits (rho-1/GBRR1, rho-2/GBRR2 and rho-3/GBRR3) coassemble either to form functional homopentamers or heteropentamers. Rho-2 is unable to form a functional homopentamer. Interacts with SQSTM1.

It is found in the postsynaptic cell membrane. It localises to the cell membrane. The enzyme catalyses chloride(in) = chloride(out). Functionally, rho subunit of the pentameric ligand-gated chloride channels responsible for mediating the effects of gamma-aminobutyric acid (GABA), the major inhibitory neurotransmitter in the brain. Rho-containing GABA-gated chloride channels are a subclass of GABA(A) receptors (GABAARs) entirely composed of rho subunits, where GABA molecules bind at the rho intersubunit interfaces. When activated by GABA, rho-GABAARs selectively allow the flow of chloride anions across the cell membrane down their electrochemical gradient. Rho-2 GABAARs may contribute to the regulation of glial development in the cerebellum by controlling extrasynaptic transmission. Rho-2 GABAARs are also involved in neuronal tonic (extrasynaptic) and phasic (synaptic) transmission in the Purkinje neurons of the cerebellum. Rho-2 GABAARs expressed in retina may play a role in retinal neurotransmission. In Homo sapiens (Human), this protein is Gamma-aminobutyric acid receptor subunit rho-2.